The chain runs to 2193 residues: Protein sidekick-1 (2193 aa).

The segment covering 1–23 (MARARPSVAGGGVAAPPERAGPG) has biased composition (low complexity). Positions 1 to 56 (MARARPSVAGGGVAAPPERAGPGRPRRSRTGHHCDPECPGLRAAPRTPGPGAGRRA) are disordered. Ig-like C2-type domains lie at 86-168 (PYFK…SEIQ), 173-259 (GNFM…SPFI), 275-363 (PIIV…AFLS), 368-458 (PYFT…LDVT), and 462-551 (PAFT…AMLT). A disulfide bridge links Cys-108 with Cys-151. Asn-123, Asn-253, and Asn-283 each carry an N-linked (GlcNAc...) asparagine glycan. 3 disulfides stabilise this stretch: Cys-297/Cys-344, Cys-390/Cys-440, and Cys-483/Cys-535. N-linked (GlcNAc...) asparagine glycosylation is found at Asn-532, Asn-545, and Asn-554. The 90-residue stretch at 556–645 (TSIVHPPEDR…GSDSRTARLE (90 aa)) folds into the Ig-like C2-type 6 domain. The cysteines at positions 577 and 629 are disulfide-linked. Fibronectin type-III domains are found at residues 652–748 (PPQN…LPEE), 753–849 (PPKN…TLQG), 854–952 (PPQN…THED), 956–1050 (AVGH…VPPD), 1054–1153 (APSN…TLQA), 1158–1256 (APTS…TRES), 1261–1358 (APEN…TKDD), 1362–1456 (PPVR…TEKR), 1461–1558 (PPRE…TLQD), 1563–1681 (PPGS…VGEA), 1686–1782 (APQN…THQA), 1786–1881 (PPSF…AGPA), and 1884–1982 (SPGS…SAQA). Asn-764, Asn-803, Asn-864, Asn-997, and Asn-1006 each carry an N-linked (GlcNAc...) asparagine glycan. 2 N-linked (GlcNAc...) asparagine glycosylation sites follow: Asn-1264 and Asn-1315. N-linked (GlcNAc...) asparagine glycans are attached at residues Asn-1636, Asn-1730, Asn-1801, and Asn-1875. A helical transmembrane segment spans residues 1992–2012 (FLLVMALSSLLLILLVVFVLV). The Cytoplasmic portion of the chain corresponds to 2013 to 2193 (LHGQSKKYKS…APLTGFSSFV (181 aa)). The disordered stretch occupies residues 2057 to 2080 (STFSKKNGTRSPPRPSPGGLHYSD). The short motif at 2187 to 2193 (TGFSSFV) is the PDZ-binding element.

The protein belongs to the sidekick family. Homodimer; mediates homophilic interactions to promote cell adhesion. Interacts (via PDZ-binding motif) with MAGI1, MAGI2, DLG2, DLG3 and DLG4. In terms of assembly, does not mediate homophilic interactions. Expressed by non-overlapping subsets of retinal neurons. Sdk1 and Sdk2 are expressed in non-overlapping subsets of interneurons and retinal ganglion cells (RGCs) that form synapses in distinct inner plexiform layer (IPL) sublaminae (at protein level).

It is found in the cell membrane. It localises to the synapse. In terms of biological role, adhesion molecule that promotes lamina-specific synaptic connections in the retina. Expressed in specific subsets of interneurons and retinal ganglion cells (RGCs) and promotes synaptic connectivity via homophilic interactions. The polypeptide is Protein sidekick-1 (Mus musculus (Mouse)).